We begin with the raw amino-acid sequence, 121 residues long: Small ribosomal subunit protein bS6 (121 aa).

This sequence belongs to the bacterial ribosomal protein bS6 family.

Its function is as follows. Binds together with bS18 to 16S ribosomal RNA. The polypeptide is Small ribosomal subunit protein bS6 (Rickettsia canadensis (strain McKiel)).